Consider the following 442-residue polypeptide: Ribosomal protein uS12 methylthiotransferase RimO (442 aa).

Positions 8-118 (PKVGFVSLGC…VLGHVHKYVE (111 aa)) constitute an MTTase N-terminal domain. [4Fe-4S] cluster-binding residues include Cys-17, Cys-53, Cys-82, Cys-150, Cys-154, and Cys-157. Residues 136 to 373 (LTPRHYAYLK…MELQQQVSIR (238 aa)) enclose the Radical SAM core domain. The TRAM domain maps to 376–442 (ARKVGKEMLV…EYDLWASLID (67 aa)).

It belongs to the methylthiotransferase family. RimO subfamily. [4Fe-4S] cluster serves as cofactor.

It is found in the cytoplasm. It catalyses the reaction L-aspartate(89)-[ribosomal protein uS12]-hydrogen + (sulfur carrier)-SH + AH2 + 2 S-adenosyl-L-methionine = 3-methylsulfanyl-L-aspartate(89)-[ribosomal protein uS12]-hydrogen + (sulfur carrier)-H + 5'-deoxyadenosine + L-methionine + A + S-adenosyl-L-homocysteine + 2 H(+). Catalyzes the methylthiolation of an aspartic acid residue of ribosomal protein uS12. The sequence is that of Ribosomal protein uS12 methylthiotransferase RimO from Aeromonas hydrophila subsp. hydrophila (strain ATCC 7966 / DSM 30187 / BCRC 13018 / CCUG 14551 / JCM 1027 / KCTC 2358 / NCIMB 9240 / NCTC 8049).